Here is a 204-residue protein sequence, read N- to C-terminus: Tic20 family protein Ycf60 (204 aa).

Transmembrane regions (helical) follow at residues 5–25 (LPSLIIIMLTTFSIILISFII), 87–107 (LMPLVIFYVTHPTLAVIIFFI), 133–153 (ILLFLINSLLGATFRALPIEF), and 159–179 (GLMMCNTLFWFVLSTISYSII).

The protein belongs to the Tic20 family.

The protein localises to the plastid. It localises to the chloroplast membrane. This chain is Tic20 family protein Ycf60 (ycf60), found in Gracilaria tenuistipitata var. liui (Red alga).